We begin with the raw amino-acid sequence, 394 residues long: Flavohemoprotein (394 aa).

The 136-residue stretch at 1 to 136 (MISQQTIDIV…LANVFITREE (136 aa)) folds into the Globin domain. H85 is a heme b binding site. Catalysis depends on charge relay system residues Y95 and E135. The segment at 147-394 (GGWRGTREFT…YECFGPHKVL (248 aa)) is reductase. Residues 150–255 (RGTREFTLIE…AAPAGDFFLD (106 aa)) form the FAD-binding FR-type domain. FAD is bound by residues Y188 and 204–207 (RQYS). Residue 268–273 (GVGLTP) participates in NADP(+) binding. FAD is bound at residue 387 to 390 (CFGP).

Belongs to the globin family. Two-domain flavohemoproteins subfamily. The protein in the C-terminal section; belongs to the flavoprotein pyridine nucleotide cytochrome reductase family. Heme b serves as cofactor. Requires FAD as cofactor.

The catalysed reaction is 2 nitric oxide + NADPH + 2 O2 = 2 nitrate + NADP(+) + H(+). It carries out the reaction 2 nitric oxide + NADH + 2 O2 = 2 nitrate + NAD(+) + H(+). Its function is as follows. Is involved in NO detoxification in an aerobic process, termed nitric oxide dioxygenase (NOD) reaction that utilizes O(2) and NAD(P)H to convert NO to nitrate, which protects the bacterium from various noxious nitrogen compounds. Therefore, plays a central role in the inducible response to nitrosative stress. In Photobacterium profundum (strain SS9), this protein is Flavohemoprotein.